Here is a 64-residue protein sequence, read N- to C-terminus: Beta-defensin 5 (64 aa).

The N-terminal stretch at 1-22 (MRLHHLLLVLLFLVLSAGSGFT) is a signal peptide. Gln-23 is modified (pyrrolidone carboxylic acid). Disulfide bonds link Cys-31/Cys-60, Cys-38/Cys-53, and Cys-43/Cys-61.

It belongs to the beta-defensin family. Neutrophilic granules. Alveolar macrophages.

The protein localises to the secreted. Its function is as follows. Has bactericidal activity. Active against E.coli ML35 but not against S.aureus 502A. The protein is Beta-defensin 5 (DEFB5) of Bos taurus (Bovine).